A 383-amino-acid polypeptide reads, in one-letter code: Acetylornithine deacetylase (383 aa).

Residue histidine 80 coordinates Zn(2+). Residue aspartate 82 is part of the active site. Aspartate 112 provides a ligand contact to Zn(2+). Residue glutamate 144 is part of the active site. Zn(2+)-binding residues include glutamate 145, glutamate 169, and histidine 355.

This sequence belongs to the peptidase M20A family. ArgE subfamily. Homodimer. The cofactor is Zn(2+). Co(2+) serves as cofactor. Glutathione is required as a cofactor.

It localises to the cytoplasm. It catalyses the reaction N(2)-acetyl-L-ornithine + H2O = L-ornithine + acetate. It participates in amino-acid biosynthesis; L-arginine biosynthesis; L-ornithine from N(2)-acetyl-L-ornithine (linear): step 1/1. In terms of biological role, catalyzes the hydrolysis of the amide bond of N(2)-acetylated L-amino acids. Cleaves the acetyl group from N-acetyl-L-ornithine to form L-ornithine, an intermediate in L-arginine biosynthesis pathway, and a branchpoint in the synthesis of polyamines. This is Acetylornithine deacetylase from Pectobacterium atrosepticum (strain SCRI 1043 / ATCC BAA-672) (Erwinia carotovora subsp. atroseptica).